The sequence spans 86 residues: Small ribosomal subunit protein bS20 (86 aa).

The protein belongs to the bacterial ribosomal protein bS20 family.

Binds directly to 16S ribosomal RNA. The sequence is that of Small ribosomal subunit protein bS20 from Kocuria rhizophila (strain ATCC 9341 / DSM 348 / NBRC 103217 / DC2201).